We begin with the raw amino-acid sequence, 443 residues long: Tubulin beta chain (443 aa).

The GTP site is built by Gln-11, Glu-69, Ser-138, Gly-142, Thr-143, Gly-144, Asn-204, and Asn-226. Residue Glu-69 participates in Mg(2+) binding. The segment at 424–443 (QYQDATAEEEGEFEEEEGEN) is disordered. Over residues 429–443 (TAEEEGEFEEEEGEN) the composition is skewed to acidic residues.

It belongs to the tubulin family. As to quaternary structure, dimer of alpha and beta chains. A typical microtubule is a hollow water-filled tube with an outer diameter of 25 nm and an inner diameter of 15 nM. Alpha-beta heterodimers associate head-to-tail to form protofilaments running lengthwise along the microtubule wall with the beta-tubulin subunit facing the microtubule plus end conferring a structural polarity. Microtubules usually have 13 protofilaments but different protofilament numbers can be found in some organisms and specialized cells. The cofactor is Mg(2+). In terms of processing, some glutamate residues at the C-terminus are either polyglutamylated or polyglycylated. These 2 modifications occur exclusively on glutamate residues and result in either polyglutamate or polyglycine chains on the gamma-carboxyl group. Both modifications can coexist on the same protein on adjacent residues, and lowering polyglycylation levels increases polyglutamylation, and reciprocally. The precise function of such modifications is still unclear but they regulate the assembly and dynamics of axonemal microtubules.

The protein localises to the cytoplasm. The protein resides in the cytoskeleton. In terms of biological role, tubulin is the major constituent of microtubules, a cylinder consisting of laterally associated linear protofilaments composed of alpha- and beta-tubulin heterodimers. Microtubules grow by the addition of GTP-tubulin dimers to the microtubule end, where a stabilizing cap forms. Below the cap, tubulin dimers are in GDP-bound state, owing to GTPase activity of alpha-tubulin. This chain is Tubulin beta chain (BTU1), found in Tetrahymena thermophila.